Consider the following 381-residue polypeptide: MMMHSRNRSWTLTLLALGVVLATSAEDLPRSNRIAVPGEPLYYLMADAGPVVTPNEALKRTNRSLLKWWDDLFPRNNNNCCNNNNNNLLYPTAPLLPAPAVPNNCNGLQLQDLDPFKQMKLFKKLPELFPTASPCGQCGGGCGQNNYVAPAPQSPSYGGDGYGVLPNGGYIKPDTEYNGPGDGDAGYVAPAAPAYEAPAPPAPAYEAPAPPAPAYEAPAPAAPAYEAPAPAAPAYEAPTTDYSAPAPPAPAYEPPASSYTQGYSQPAQPSYVGAPPAQIVYQPIIYLSTPLASKSSTSQVEYDDQKYVTPTAPPPPPPPAPVYEAPSQNCYQPAAPPAPNYATPSCQTPIRLSLIDQPYRVAPELFEEYNYRLALASQNIL.

Residues 1–25 (MMMHSRNRSWTLTLLALGVVLATSA) form the signal peptide. A run of 6 repeats spans residues 190 to 199 (PAAPAYEAPA), 200 to 209 (PPAPAYEAPA), 210 to 219 (PPAPAYEAPA), 220 to 229 (PAAPAYEAPA), 230 to 239 (PAAPAYEAPT), and 247 to 256 (PPAPAYEPPA). The interval 190 to 256 (PAAPAYEAPA…PPAPAYEPPA (67 aa)) is 6 X 10 AA approximate tandem repeats of P-[AP]-A-P-A-Y-E-[AP]-P-[AT]. 2 disordered regions span residues 236 to 270 (EAPTTDYSAPAPPAPAYEPPASSYTQGYSQPAQPS) and 309 to 329 (TPTAPPPPPPPAPVYEAPSQN). The span at 311–321 (TAPPPPPPPAP) shows a compositional bias: pro residues.

Post-translationally, sulfated by pip; may be involved in embryo dorsal-ventral axis determination. Sulfation by pip may occur on covalently bound glycosaminoglycans. In terms of processing, may undergo both disulfide and non-disulfide cross-linking upon incorporation into the vitelline membrane. As to expression, present in the perivitelline space of stage 10 egg chambers and in the vitelline membrane adjacent to the oocyte in stage 13 and 14 egg chambers (at protein level).

The protein localises to the secreted. Its subcellular location is the extracellular space. The protein resides in the extracellular matrix. Minor protein component of the vitelline membrane. Involved in vitelline membrane biogenesis during late stages of oogenesis. Required for efficient disulfide and non-disulfide cross-linking of several vitelline membrane components. In Drosophila melanogaster (Fruit fly), this protein is Protein palisade.